Reading from the N-terminus, the 192-residue chain is Charged multivesicular body protein 1 (192 aa).

Coiled coils occupy residues Gln7 to Lys35 and Asn102 to Gln125. The segment at Gln164–Asn192 is disordered.

The protein belongs to the SNF7 family. Probable peripherally associated component of the endosomal sorting required for transport complex III (ESCRT-III).

The protein resides in the endosome membrane. Its function is as follows. Probable peripherally associated component of the endosomal sorting required for transport complex III (ESCRT-III) which is involved in multivesicular bodies (MVBs) formation and sorting of endosomal cargo proteins into MVBs. MVBs contain intraluminal vesicles (ILVs) that are generated by invagination and scission from the limiting membrane of the endosome and are delivered to lysosomes enabling degradation of membrane proteins. This Dictyostelium discoideum (Social amoeba) protein is Charged multivesicular body protein 1 (chmp1).